Consider the following 137-residue polypeptide: BolA-like protein 1 (137 aa).

At S81 the chain carries Phosphoserine. The segment at 115-137 (RENPQLDISPPCLGGSKKTRGTS) is disordered.

This sequence belongs to the BolA/IbaG family. As to quaternary structure, interacts with GLRX5.

It is found in the mitochondrion. Acts as a mitochondrial iron-sulfur (Fe-S) cluster assembly factor that facilitates (Fe-S) cluster insertion into a subset of mitochondrial proteins. Probably acts together with the monothiol glutaredoxin GLRX5. May protect cells against oxidative stress. In Mus musculus (Mouse), this protein is BolA-like protein 1 (Bola1).